The sequence spans 156 residues: Small ribosomal subunit protein uS7 (156 aa).

Belongs to the universal ribosomal protein uS7 family. In terms of assembly, part of the 30S ribosomal subunit. Contacts proteins S9 and S11.

Functionally, one of the primary rRNA binding proteins, it binds directly to 16S rRNA where it nucleates assembly of the head domain of the 30S subunit. Is located at the subunit interface close to the decoding center, probably blocks exit of the E-site tRNA. The chain is Small ribosomal subunit protein uS7 from Synechocystis sp. (strain ATCC 27184 / PCC 6803 / Kazusa).